The chain runs to 249 residues: 5'-nucleotidase SurE (249 aa).

Positions 8, 9, 39, and 91 each coordinate a divalent metal cation.

This sequence belongs to the SurE nucleotidase family. A divalent metal cation is required as a cofactor.

It is found in the cytoplasm. It catalyses the reaction a ribonucleoside 5'-phosphate + H2O = a ribonucleoside + phosphate. In terms of biological role, nucleotidase that shows phosphatase activity on nucleoside 5'-monophosphates. The protein is 5'-nucleotidase SurE of Stutzerimonas stutzeri (strain A1501) (Pseudomonas stutzeri).